The chain runs to 420 residues: L-cysteine:1D-myo-inositol 2-amino-2-deoxy-alpha-D-glucopyranoside ligase (420 aa).

A Zn(2+)-binding site is contributed by Cys43. Residues 43-46 (CGIT), Thr58, and 81-83 (NIT) each bind L-cysteinyl-5'-AMP. The 'HIGH' region signature appears at 45–55 (ITPYDATHLGH). The 'ERGGDP' region motif lies at 187-192 (ERGGDP). L-cysteinyl-5'-AMP is bound at residue Trp227. A Zn(2+)-binding site is contributed by Cys231. Position 249–251 (249–251 (GSD)) interacts with L-cysteinyl-5'-AMP. Zn(2+) is bound at residue His256. Residue Ile289 participates in L-cysteinyl-5'-AMP binding. The short motif at 295 to 299 (KMSKS) is the 'KMSKS' region element.

It belongs to the class-I aminoacyl-tRNA synthetase family. MshC subfamily. As to quaternary structure, monomer. It depends on Zn(2+) as a cofactor.

It carries out the reaction 1D-myo-inositol 2-amino-2-deoxy-alpha-D-glucopyranoside + L-cysteine + ATP = 1D-myo-inositol 2-(L-cysteinylamino)-2-deoxy-alpha-D-glucopyranoside + AMP + diphosphate + H(+). In terms of biological role, catalyzes the ATP-dependent condensation of GlcN-Ins and L-cysteine to form L-Cys-GlcN-Ins. This is L-cysteine:1D-myo-inositol 2-amino-2-deoxy-alpha-D-glucopyranoside ligase from Segniliparus rotundus (strain ATCC BAA-972 / CDC 1076 / CIP 108378 / DSM 44985 / JCM 13578).